The following is a 3096-amino-acid chain: Unconventional myosin-XVB (3096 aa).

4 disordered regions span residues 1 to 330 (MGRN…GPED), 389 to 489 (RPPE…GWGR), 508 to 540 (GGMPRASPGGRSPQVPTSPVPGDPFDQEDETPD), and 553 to 649 (AGRA…GPRL). Residues 19 to 33 (ASGEQESGSASADGA) show a composition bias toward low complexity. Basic and acidic residues predominate over residues 34 to 50 (PSRERRSDRGQADRAKP). Residues 124-143 (RRRRKRKDKGPSARRGRRTP) are compositionally biased toward basic residues. Composition is skewed to basic and acidic residues over residues 212–222 (DWPHADTRGRE) and 261–288 (TFEDSSRAPRDTGPAKDASDNRAQRGAE). Low complexity predominate over residues 307 to 330 (AVGQVPAAAGEGEAGAAAGAGPED). A compositionally biased stretch (basic and acidic residues) spans 406–416 (WGRRKPDEGRG). Over residues 417-426 (HGRGSKGRGR) the composition is skewed to basic residues. A compositionally biased stretch (basic and acidic residues) spans 427–489 (GKADEGRGHE…HQRGYEGWGR (63 aa)). The 675-residue stretch at 720 to 1394 (EDMEDLARLR…GWQRLEELRD (675 aa)) folds into the Myosin motor domain. 818 to 825 (GHSGSGKT) contributes to the ATP binding site. Positions 1273 to 1295 (LEDLIARLGRSHVYFIQCLTPNP) are actin-binding. Positions 1414-1443 (RQRVLPRMQARMRGFQARKRYLRRRAALGQ) constitute an IQ domain. The MyTH4 1 domain maps to 1551–1702 (RPGQPLAKPL…PTQLEWLAGW (152 aa)). Disordered stretches follow at residues 1802–1833 (PGIQAPSLPPGPPPGPAPTLPSRDHTGEVQRS), 1963–2026 (MQQR…PKSF), and 2040–2262 (QITV…LPED). Positions 1808 to 1820 (SLPPGPPPGPAPT) are enriched in pro residues. Over residues 1963-1980 (MQQRQQQARASEAASQAS) the composition is skewed to low complexity. Positions 2059–2076 (AQEEEEEEEEEEEQEEQE) are enriched in acidic residues. The span at 2102 to 2116 (APKEAEAEPAKETAA) shows a compositional bias: basic and acidic residues. Over residues 2159–2170 (GPVPVPVQPSRP) the composition is skewed to pro residues. A compositionally biased stretch (basic and acidic residues) spans 2176–2185 (RKIDPKDEAL). 2 stretches are compositionally biased toward pro residues: residues 2199–2217 (MLSPSPGKGPPPAVAPRPK) and 2247–2261 (HTPPPPPAPPLPLPE). Residues 2481 to 2542 (KDSGYVIALR…PADIVQPAAA (62 aa)) form the SH3 domain. The tract at residues 2548 to 2567 (SKEQRSGWHKGQLSNGEPGL) is disordered. The region spanning 2643–2789 (YTKAPIQESL…PPPGEMKAFL (147 aa)) is the MyTH4 2 domain. The FERM domain occupies 2795–3096 (RLLLIHLPGG…ASCTEWPSIN (302 aa)).

The protein belongs to the TRAFAC class myosin-kinesin ATPase superfamily. Myosin family. As to expression, detected in brain, stomach and kidney.

The protein localises to the cytoplasm. The polypeptide is Unconventional myosin-XVB (Homo sapiens (Human)).